The sequence spans 542 residues: Monocarboxylate transporter 3 (542 aa).

Over 1–19 the chain is Cytoplasmic; the sequence is MGRADPEEGQLPAPVKPPD. Residues 20–40 traverse the membrane as a helical segment; the sequence is GGWGWIVLFGCFVITGFSYAF. Topologically, residues 41 to 63 are extracellular; it reads PKAVSVYFKELMKDFHVGYSDTA. The chain crosses the membrane as a helical span at residues 64–84; sequence WISSIMLAMLYGTGPVCSIMV. Topologically, residues 85–93 are cytoplasmic; that stretch reads NQFGCRPVM. The helical transmembrane segment at 94-114 threads the bilayer; that stretch reads LIGGLLASSGMILASFTTNII. Over 115-119 the chain is Extracellular; that stretch reads ELYLT. Residues 120–140 form a helical membrane-spanning segment; the sequence is AGVLTGLGMALNFQPSLIMLG. Over 141–152 the chain is Cytoplasmic; the sequence is TYFDKRRPLANG. Residues 153 to 173 traverse the membrane as a helical segment; that stretch reads LAAAGSPVFLSSLSPLGQVLL. Residues 174–181 lie on the Extracellular side of the membrane; that stretch reads EKFGWRGG. Residues 182–202 traverse the membrane as a helical segment; that stretch reads FLIMGGLLLNCCTCGAVMRPL. At 203–265 the chain is on the cytoplasmic side; the sequence is DAGMKRKTEK…LDFSIFSNRG (63 aa). The segment at 226–247 is disordered; the sequence is GGKSEEGISTTDGTKKTKKAKK. The helical transmembrane segment at 266 to 286 threads the bilayer; the sequence is FIIYTISKFILVLGLFVPPIL. Residues 287-301 lie on the Extracellular side of the membrane; the sequence is LVNYAKDTGVPDTEA. A helical transmembrane segment spans residues 302–322; it reads AFLLSIIGFIDIFARPACGMV. At 323 to 330 the chain is on the cytoplasmic side; that stretch reads AGLKWVRP. Residues 331–351 form a helical membrane-spanning segment; that stretch reads HVAYLFSFAMLFNGLTDICSA. The Extracellular portion of the chain corresponds to 352 to 357; sequence RASNYT. The helical transmembrane segment at 358 to 378 threads the bilayer; sequence GLVIFCVFFGISYGMVGALQF. Over 379 to 392 the chain is Cytoplasmic; that stretch reads EVLMAIVGSQKFSS. The helical transmembrane segment at 393-413 threads the bilayer; the sequence is AIGLVLLIEAFAVLIGPPSAG. At 414–423 the chain is on the extracellular side; sequence RLVDALKNYE. Residues 424–444 traverse the membrane as a helical segment; that stretch reads VIFYLAGSEVVLSALFLAMAT. Residues 445-542 are Cytoplasmic-facing; sequence YCCLNRGKKT…ADQTVERDSF (98 aa). Positions 453 to 542 are disordered; sequence KTPPPEKNPS…ADQTVERDSF (90 aa). 2 basolateral sorting signal regions span residues 465 to 510 and 511 to 532; these read GGSD…VEDE and QSGEGGRCPEADGEVSSRAGCN. A compositionally biased stretch (acidic residues) spans 468 to 478; sequence DTEEAESDVQE.

This sequence belongs to the major facilitator superfamily. Monocarboxylate porter (TC 2.A.1.13) family. In terms of tissue distribution, retinal pigment epithelium.

It is found in the basolateral cell membrane. The enzyme catalyses (S)-lactate(in) + H(+)(in) = (S)-lactate(out) + H(+)(out). Probable retinal pigment epithelium (RPE)-specific proton-coupled L-lactate transporter. May facilitate transport of lactate and H(+) out of the retina and could therefore play a role in pH and ion homeostasis of the outer retina. The sequence is that of Monocarboxylate transporter 3 (SLC16A8) from Gallus gallus (Chicken).